Consider the following 347-residue polypeptide: Hyaluronidase conohyal-ad1 (347 aa).

Residues 1 to 18 (MRAVVVVTGLVVVVVTTT) form the signal peptide. Residues 19–33 (LSLQDHDVKSASSPL) constitute a propeptide that is removed on maturation. The interval 27-49 (KSASSPLSSSVDQGSSGDDCDEG) is disordered. Residues 28 to 43 (SASSPLSSSVDQGSSG) are compositionally biased toward low complexity. Cys-67 and Cys-343 form a disulfide bridge. Glu-150 functions as the Proton donor in the catalytic mechanism.

This sequence belongs to the glycosyl hydrolase 56 family. Post-translationally, contains 4 disulfide bonds. Is N-linked glycosylated at three positions. As to expression, expressed by the venom duct.

Its subcellular location is the secreted. The enzyme catalyses Random hydrolysis of (1-&gt;4)-linkages between N-acetyl-beta-D-glucosamine and D-glucuronate residues in hyaluronate.. In terms of biological role, hyaluronidase catalyzes the hydrolysis of hyaluronic acid (HA), an anionic, nonsulfated glycosaminoglycan distributed widely throughout connective, epithelial, and neural tissues. In venom, they are known to enhance diffusion of the venom by degrading the extracellular matrix. In Conus adamsonii (Rhododendron cone), this protein is Hyaluronidase conohyal-ad1.